A 141-amino-acid chain; its full sequence is uncharacterized protein (141 aa).

Helical transmembrane passes span 7-27, 47-67, 75-95, and 106-126; these read VAIM…AASL, SAVG…MLGV, AVLC…ILMF, and VIFV…WFVA.

It localises to the cell membrane. This is an uncharacterized protein from Bacillus subtilis (strain 168).